The chain runs to 140 residues: Methylglyoxal synthase (140 aa).

The 140-residue stretch at 1–140 (MNIALIAHDE…KERQEKEGTP (140 aa)) folds into the MGS-like domain. Residues His-8, Lys-12, 34–37 (TGTT), and 54–55 (SG) contribute to the substrate site. The active-site Proton donor/acceptor is the Asp-60. Position 87 (His-87) interacts with substrate.

It belongs to the methylglyoxal synthase family.

It carries out the reaction dihydroxyacetone phosphate = methylglyoxal + phosphate. Its function is as follows. Catalyzes the formation of methylglyoxal from dihydroxyacetone phosphate. The protein is Methylglyoxal synthase of Oceanobacillus iheyensis (strain DSM 14371 / CIP 107618 / JCM 11309 / KCTC 3954 / HTE831).